Consider the following 122-residue polypeptide: MIKGIGIDIIEIDRIGQAISKNNGFMDRIFTLNEQRLFEEKNNIMETIAGHFAAKEATAKALGTGIRNMKWKDIEILKDSLGKPYVELHNNAKTLADSMHIEQILISISHNKSNAVAQAIAI.

Residues D8 and E56 each contribute to the Mg(2+) site.

This sequence belongs to the P-Pant transferase superfamily. AcpS family. The cofactor is Mg(2+).

Its subcellular location is the cytoplasm. It catalyses the reaction apo-[ACP] + CoA = holo-[ACP] + adenosine 3',5'-bisphosphate + H(+). In terms of biological role, transfers the 4'-phosphopantetheine moiety from coenzyme A to a Ser of acyl-carrier-protein. This is Holo-[acyl-carrier-protein] synthase from Alkaliphilus oremlandii (strain OhILAs) (Clostridium oremlandii (strain OhILAs)).